The primary structure comprises 173 residues: Peptide deformylase (173 aa).

Positions 94 and 136 each coordinate Fe cation. Residue E137 is part of the active site. H140 is a Fe cation binding site.

It belongs to the polypeptide deformylase family. Fe(2+) serves as cofactor.

The enzyme catalyses N-terminal N-formyl-L-methionyl-[peptide] + H2O = N-terminal L-methionyl-[peptide] + formate. In terms of biological role, removes the formyl group from the N-terminal Met of newly synthesized proteins. Requires at least a dipeptide for an efficient rate of reaction. N-terminal L-methionine is a prerequisite for activity but the enzyme has broad specificity at other positions. This is Peptide deformylase from Desulfosudis oleivorans (strain DSM 6200 / JCM 39069 / Hxd3) (Desulfococcus oleovorans).